A 116-amino-acid polypeptide reads, in one-letter code: MSEPQNGRGALFAGGLAAILASACCLGPLVLIALGFSGAWIGNLTVLEPYRPIFIGAALVALFFAWRRIVRPTAACKPGEVCAIPQVRTTYKLIFWFVAVLVLVALGFPYVMPFFY.

A run of 2 helical transmembrane segments spans residues 16–36 and 46–66; these read LAAI…ALGF and VLEP…FFAW. Hg(2+) contacts are provided by Cys24 and Cys25. Residues Cys76 and Cys82 each coordinate Hg(2+). Residues 94–114 form a helical membrane-spanning segment; sequence IFWFVAVLVLVALGFPYVMPF.

It belongs to the MerT family.

It is found in the cell inner membrane. Involved in mercury resistance. Probably transfers a mercuric ion from the periplasmic Hg(2+)-binding protein MerP to the cytoplasmic mercuric reductase MerA. This is Mercuric transport protein MerT from Acinetobacter calcoaceticus.